We begin with the raw amino-acid sequence, 217 residues long: Large ribosomal subunit protein uL4 (217 aa).

The tract at residues 46-103 is disordered; the sequence is KRQGTHATKTRGMVSGGGRKPFRQKGTGRARQGSIRAPHFTGGGTVHGPQPRDYSQRT.

The protein belongs to the universal ribosomal protein uL4 family. Part of the 50S ribosomal subunit.

In terms of biological role, one of the primary rRNA binding proteins, this protein initially binds near the 5'-end of the 23S rRNA. It is important during the early stages of 50S assembly. It makes multiple contacts with different domains of the 23S rRNA in the assembled 50S subunit and ribosome. Functionally, forms part of the polypeptide exit tunnel. This is Large ribosomal subunit protein uL4 from Corynebacterium jeikeium (strain K411).